Consider the following 666-residue polypeptide: DNA mismatch repair protein MutL (666 aa).

The protein belongs to the DNA mismatch repair MutL/HexB family.

In terms of biological role, this protein is involved in the repair of mismatches in DNA. It is required for dam-dependent methyl-directed DNA mismatch repair. May act as a 'molecular matchmaker', a protein that promotes the formation of a stable complex between two or more DNA-binding proteins in an ATP-dependent manner without itself being part of a final effector complex. The chain is DNA mismatch repair protein MutL from Clostridium botulinum (strain Langeland / NCTC 10281 / Type F).